Reading from the N-terminus, the 391-residue chain is Alanine racemase (391 aa).

The Proton acceptor; specific for D-alanine role is filled by lysine 46. At lysine 46 the chain carries N6-(pyridoxal phosphate)lysine. Residue arginine 148 coordinates substrate. The Proton acceptor; specific for L-alanine role is filled by tyrosine 283. A substrate-binding site is contributed by methionine 331.

It belongs to the alanine racemase family. Pyridoxal 5'-phosphate serves as cofactor.

It catalyses the reaction L-alanine = D-alanine. It participates in amino-acid biosynthesis; D-alanine biosynthesis; D-alanine from L-alanine: step 1/1. Catalyzes the interconversion of L-alanine and D-alanine. May also act on other amino acids. This chain is Alanine racemase (alr), found in Streptomyces coelicolor (strain ATCC BAA-471 / A3(2) / M145).